The sequence spans 882 residues: Cutinase transcription factor 1 beta (882 aa).

Residues 1–20 (MNAETPEGSAAPPSPASTSA) are compositionally biased toward low complexity. The disordered stretch occupies residues 1 to 49 (MNAETPEGSAAPPSPASTSAKTVTDKTNKKRASPSGDSEQPTKVTKRRA). A DNA-binding region (zn(2)-C6 fungal-type) is located at residues 53-81 (CVSCRARKVRCDVVEGAPCGNCRWDNVEC). The disordered stretch occupies residues 117–148 (NPMGMSTADLRRPSSGSAISTSSIDGPSSFLS). Positions 130–139 (SSGSAISTSS) are enriched in low complexity.

It is found in the nucleus. This chain is Cutinase transcription factor 1 beta (CTF1-BETA), found in Fusarium vanettenii (Neocosmospora pisi).